A 209-amino-acid chain; its full sequence is Uridine kinase (209 aa).

Position 16–23 (16–23 (GGSGSGKT)) interacts with ATP.

It belongs to the uridine kinase family.

The protein localises to the cytoplasm. The catalysed reaction is uridine + ATP = UMP + ADP + H(+). It catalyses the reaction cytidine + ATP = CMP + ADP + H(+). The protein operates within pyrimidine metabolism; CTP biosynthesis via salvage pathway; CTP from cytidine: step 1/3. It participates in pyrimidine metabolism; UMP biosynthesis via salvage pathway; UMP from uridine: step 1/1. The chain is Uridine kinase from Lactiplantibacillus plantarum (strain ATCC BAA-793 / NCIMB 8826 / WCFS1) (Lactobacillus plantarum).